A 34-amino-acid polypeptide reads, in one-letter code: MGSMILDITGNSMSAIVKVVSNIIRPLVLKNFII.

This is an uncharacterized protein from Saccharomyces cerevisiae (strain ATCC 204508 / S288c) (Baker's yeast).